Reading from the N-terminus, the 411-residue chain is Argininosuccinate synthase (411 aa).

Residues 11–19 (AYSGGLDTS) and Ala37 each bind ATP. Residues Tyr88 and Ser93 each contribute to the L-citrulline site. Position 116-124 (116-124 (SHGATGKGN)) interacts with ATP. Residues Thr120, Asn124, and Asp125 each contribute to the L-aspartate site. Residue Asn124 participates in L-citrulline binding. L-citrulline-binding residues include Arg128, Ser181, Ser190, Glu271, and Tyr283.

Belongs to the argininosuccinate synthase family. As to quaternary structure, homotetramer.

It is found in the cytoplasm. The protein localises to the cytosol. It catalyses the reaction L-citrulline + L-aspartate + ATP = 2-(N(omega)-L-arginino)succinate + AMP + diphosphate + H(+). The protein operates within amino-acid biosynthesis; L-arginine biosynthesis; L-arginine from L-ornithine and carbamoyl phosphate: step 2/3. It participates in nitrogen metabolism; urea cycle; (N(omega)-L-arginino)succinate from L-aspartate and L-citrulline: step 1/1. Its function is as follows. One of the enzymes of the urea cycle, the metabolic pathway transforming neurotoxic amonia produced by protein catabolism into inocuous urea in the liver of ureotelic animals. Catalyzes the formation of arginosuccinate from aspartate, citrulline and ATP and together with ASL it is responsible for the biosynthesis of arginine in most body tissues. The polypeptide is Argininosuccinate synthase (Xenopus laevis (African clawed frog)).